Reading from the N-terminus, the 135-residue chain is Histone H2A (135 aa).

It belongs to the histone H2A family. The nucleosome is a histone octamer containing two molecules each of H2A, H2B, H3 and H4 assembled in one H3-H4 heterotetramer and two H2A-H2B heterodimers. The octamer wraps approximately 147 bp of DNA.

The protein localises to the nucleus. Its subcellular location is the chromosome. In terms of biological role, core component of nucleosome. Nucleosomes wrap and compact DNA into chromatin, limiting DNA accessibility to the cellular machineries which require DNA as a template. Histones thereby play a central role in transcription regulation, DNA repair, DNA replication and chromosomal stability. DNA accessibility is regulated via a complex set of post-translational modifications of histones, also called histone code, and nucleosome remodeling. The protein is Histone H2A of Trypanosoma cruzi.